Reading from the N-terminus, the 161-residue chain is Large ribosomal subunit protein uL10 (161 aa).

The protein belongs to the universal ribosomal protein uL10 family. As to quaternary structure, part of the ribosomal stalk of the 50S ribosomal subunit. The N-terminus interacts with L11 and the large rRNA to form the base of the stalk. The C-terminus forms an elongated spine to which L12 dimers bind in a sequential fashion forming a multimeric L10(L12)X complex.

Its function is as follows. Forms part of the ribosomal stalk, playing a central role in the interaction of the ribosome with GTP-bound translation factors. In Mycoplasma pneumoniae (strain ATCC 29342 / M129 / Subtype 1) (Mycoplasmoides pneumoniae), this protein is Large ribosomal subunit protein uL10 (rplJ).